The sequence spans 435 residues: ATP-dependent protease ATPase subunit HslU (435 aa).

Residues isoleucine 18, 60–65 (GVGKTE), aspartate 248, glutamate 313, and arginine 385 each bind ATP.

Belongs to the ClpX chaperone family. HslU subfamily. As to quaternary structure, a double ring-shaped homohexamer of HslV is capped on each side by a ring-shaped HslU homohexamer. The assembly of the HslU/HslV complex is dependent on binding of ATP.

It localises to the cytoplasm. Its function is as follows. ATPase subunit of a proteasome-like degradation complex; this subunit has chaperone activity. The binding of ATP and its subsequent hydrolysis by HslU are essential for unfolding of protein substrates subsequently hydrolyzed by HslV. HslU recognizes the N-terminal part of its protein substrates and unfolds these before they are guided to HslV for hydrolysis. This Rhizobium etli (strain ATCC 51251 / DSM 11541 / JCM 21823 / NBRC 15573 / CFN 42) protein is ATP-dependent protease ATPase subunit HslU.